A 445-amino-acid polypeptide reads, in one-letter code: Phosphoglucosamine mutase (445 aa).

The Phosphoserine intermediate role is filled by Ser102. Mg(2+) contacts are provided by Ser102, Asp241, Asp243, and Asp245. Ser102 is subject to Phosphoserine.

It belongs to the phosphohexose mutase family. Mg(2+) serves as cofactor. Activated by phosphorylation.

It carries out the reaction alpha-D-glucosamine 1-phosphate = D-glucosamine 6-phosphate. Its function is as follows. Catalyzes the conversion of glucosamine-6-phosphate to glucosamine-1-phosphate. In Shewanella pealeana (strain ATCC 700345 / ANG-SQ1), this protein is Phosphoglucosamine mutase.